The chain runs to 1235 residues: Topoisomerase 1-associated factor 1 (1235 aa).

Disordered stretches follow at residues 327–357 (RERK…GPPV), 584–610 (GEEA…HAER), 812–841 (EGAA…TEAR), and 897–1235 (EFSP…SDEE). The segment covering 585-603 (EEAEDVGVPEDNDADDSGD) has biased composition (acidic residues). Residues 929 to 947 (DDDEEEIRGFLGDDDDEDF) show a composition bias toward acidic residues. The segment covering 964–973 (QKKRQRKRRR) has biased composition (basic residues). Residues 977–986 (SGDEEDEGVS) are compositionally biased toward acidic residues. Residues 999–1044 (EKELEKIRKIKSEMYVHASDDETDDERDREFFERERKRQETKDSKF) are compositionally biased toward basic and acidic residues. 2 stretches are compositionally biased toward acidic residues: residues 1070–1081 (VLDDEPESDESE) and 1099–1118 (SEEE…SDEE). Positions 1124–1150 (AKSKTSKRKAAVPSKRPARRPGTAKKR) are enriched in basic residues. Residues 1156–1170 (SDNDEDEDEEEDAMD) are compositionally biased toward acidic residues. The segment covering 1193-1202 (LGRRIDKMAM) has biased composition (basic and acidic residues). Residues 1203-1212 (DDGDEDEDDQ) show a composition bias toward acidic residues.

This sequence belongs to the timeless family. Component of the fork protection complex (FPC) consisting of tof-1 and csm-3.

It localises to the nucleus. In terms of biological role, forms a fork protection complex (FPC) with csm-3 and which is required for chromosome segregation during meiosis and DNA damage repair. FPC coordinates leading and lagging strand synthesis and moves with the replication fork. FPC stabilizes replication forks in a configuration that is recognized by replication checkpoint sensors. This is Topoisomerase 1-associated factor 1 (tof-1) from Neurospora crassa (strain ATCC 24698 / 74-OR23-1A / CBS 708.71 / DSM 1257 / FGSC 987).